A 231-amino-acid polypeptide reads, in one-letter code: Orotidine 5'-phosphate decarboxylase (231 aa).

Residues Asp11, Lys34, 61 to 70, Thr117, Arg179, Gln188, Gly208, and Arg209 contribute to the substrate site; that span reads DLKLHDIPNT. Lys63 serves as the catalytic Proton donor.

This sequence belongs to the OMP decarboxylase family. Type 1 subfamily. Homodimer.

It carries out the reaction orotidine 5'-phosphate + H(+) = UMP + CO2. The protein operates within pyrimidine metabolism; UMP biosynthesis via de novo pathway; UMP from orotate: step 2/2. Its function is as follows. Catalyzes the decarboxylation of orotidine 5'-monophosphate (OMP) to uridine 5'-monophosphate (UMP). This is Orotidine 5'-phosphate decarboxylase from Streptococcus suis (strain 98HAH33).